Reading from the N-terminus, the 160-residue chain is Large ribosomal subunit protein uL15 (160 aa).

The span at 1 to 14 shows a compositional bias: polar residues; the sequence is MKLNDISDNPGSSK. The segment at 1 to 35 is disordered; sequence MKLNDISDNPGSSKSRMRVGRGIGSGKGKTCGRGV. The span at 21–35 shows a compositional bias: gly residues; sequence RGIGSGKGKTCGRGV.

This sequence belongs to the universal ribosomal protein uL15 family. Part of the 50S ribosomal subunit.

In terms of biological role, binds to the 23S rRNA. This Beijerinckia indica subsp. indica (strain ATCC 9039 / DSM 1715 / NCIMB 8712) protein is Large ribosomal subunit protein uL15.